A 498-amino-acid chain; its full sequence is MRLNPTASSPGDSTLQKKKLGRIVQIIGPVLDVAFPRGKMPYIYNALVVQGRDTVGQQIHVTCEVQQLLGNNRVRAVAMSATDGLMRGMEVIDTGAPLSVPVGGATLGRIFNVLGEPVDNLGPVDNRTTSPIHKSPPAFIELDTKLSIFETGIKVVDLLAPYRRGGKIGLFGGAGVGKTVLIMELINNIAKAHGGVSVFGGVGERTREGNDLYMEMKESGVINEQKVAESKVALVYGQMNEPPGARMRVGLTALTMAEYFRDVNKQDVLLFIDNIFRFVQAGSEVSALLGRMPSAVGYQPTLSTEMGSLQERITSTKKGSITSIQAVYVPADDLTDPAPATTFAHLDATTVLSRGLAAKGIYPAVDPLDSTSTMLQPRIVGNEHYEIAQRVKQTLQRYKELQDIIAILGLDELSEEDRLTVARARKIERFLSQPFFVAEVFTGSTGKYVGLSETIRGFHLILSGEFDGLPEQAFYLVGNIDEATAKAMKLEKESNLKK.

172–179 (GGAGVGKT) serves as a coordination point for ATP.

Belongs to the ATPase alpha/beta chains family. In terms of assembly, F-type ATPases have 2 components, CF(1) - the catalytic core - and CF(0) - the membrane proton channel. CF(1) has five subunits: alpha(3), beta(3), gamma(1), delta(1), epsilon(1). CF(0) has four main subunits: a(1), b(1), b'(1) and c(9-12).

The protein localises to the plastid. It localises to the chloroplast thylakoid membrane. It carries out the reaction ATP + H2O + 4 H(+)(in) = ADP + phosphate + 5 H(+)(out). In terms of biological role, produces ATP from ADP in the presence of a proton gradient across the membrane. The catalytic sites are hosted primarily by the beta subunits. The sequence is that of ATP synthase subunit beta, chloroplastic from Pelargonium hortorum (Common geranium).